The primary structure comprises 906 residues: Cadherin-2 (906 aa).

The N-terminal stretch at 1–25 (MCRIAGALRTLLPLLAALLQASVEA) is a signal peptide. A propeptide spanning residues 26–159 (SGEIALCKTG…HSGHLQRQKR (134 aa)) is cleaved from the precursor. S96 and S135 each carry phosphoserine; by FAM20C. Cadherin domains are found at residues 160–267 (DWVI…RPEF), 268–382 (LHQV…PPEF), 383–497 (TAMT…NPYF), 498–603 (APNP…DNAP), and 604–714 (QVLP…DVDR). The Extracellular segment spans residues 160 to 724 (DWVIPPINLP…IVGAGLGTGA (565 aa)). Position 170 (E170) interacts with Ca(2+). An N-linked (GlcNAc...) asparagine glycan is attached at N190. D226, E228, D259, M260, N261, D262, and N263 together coordinate Ca(2+). N273 carries an N-linked (GlcNAc...) asparagine glycan. The Ca(2+) site is built by D293, D295, and N301. N325 carries an N-linked (GlcNAc...) asparagine glycan. D353 is a binding site for Ca(2+). 4 N-linked (GlcNAc...) asparagine glycosylation sites follow: N402, N572, N651, and N692. A helical membrane pass occupies residues 725-745 (IIAILLCIIILLILVLMFVVW). Over 746–906 (MKRRDKERQA…LADMYGGGDD (161 aa)) the chain is Cytoplasmic. The span at 863–880 (SGSTAGSLSSLNSSSSGG) shows a compositional bias: low complexity. Positions 863–884 (SGSTAGSLSSLNSSSSGGEQDY) are disordered.

Homodimer (via extracellular region). Can also form heterodimers with other cadherins (via extracellular region). Dimerization occurs in trans, i.e. with a cadherin chain from another cell. Interacts with CDCP1. Interacts with PCDH8; this complex may also include TAOK2. The interaction with PCDH8 may lead to internalization through TAOK2/p38 MAPK pathway. Identified in a complex containing FGFR4, NCAM1, CDH2, PLCG1, FRS2, SRC, SHC1, GAP43 and CTTN. May interact with OBSCN (via protein kinase domain 2). Interacts with FBXO45. Cleaved by MMP24. Ectodomain cleavage leads to the generation of a soluble 90 kDa N-terminal soluble fragment and a 45 kDa membrane-bound C-terminal fragment 1 (CTF1), which is further cleaved by gamma-secretase into a 35 kDa. Cleavage in neural stem cells by MMP24 affects CDH2-mediated anchorage of neural stem cells to ependymocytes in the adult subependymal zone, leading to modulate neural stem cell quiescence. Post-translationally, may be phosphorylated by OBSCN.

The protein resides in the cell membrane. It localises to the sarcolemma. The protein localises to the cell junction. It is found in the cell surface. Its subcellular location is the desmosome. The protein resides in the adherens junction. Calcium-dependent cell adhesion protein; preferentially mediates homotypic cell-cell adhesion by dimerization with a CDH2 chain from another cell. Cadherins may thus contribute to the sorting of heterogeneous cell types. Acts as a regulator of neural stem cells quiescence by mediating anchorage of neural stem cells to ependymocytes in the adult subependymal zone: upon cleavage by MMP24, CDH2-mediated anchorage is affected, leading to modulate neural stem cell quiescence. Plays a role in cell-to-cell junction formation between pancreatic beta cells and neural crest stem (NCS) cells, promoting the formation of processes by NCS cells. Required for proper neurite branching. Required for pre- and postsynaptic organization. CDH2 may be involved in neuronal recognition mechanism. In hippocampal neurons, may regulate dendritic spine density. The polypeptide is Cadherin-2 (CDH2) (Homo sapiens (Human)).